A 647-amino-acid chain; its full sequence is Solute carrier family 23 member 2 (647 aa).

The span at 1–11 (MMGVGKNTSKS) shows a compositional bias: polar residues. The interval 1 to 26 (MMGVGKNTSKSVEVGGSTEGKYEEEA) is disordered. Residues 8-109 (TSKSVEVGGS…LCIFLGLQHY (102 aa)) lie on the Cytoplasmic side of the membrane. Phosphoserine is present on Ser69. A Phosphothreonine modification is found at Thr74. At Ser77 the chain carries Phosphoserine. Phosphothreonine is present on Thr78. Phosphoserine is present on Ser80. A helical membrane pass occupies residues 110–130 (LTCFSGTIAVPFLLADAMCVG). Residues 131 to 138 (DDQWATSQ) are Extracellular-facing. The chain crosses the membrane as a helical span at residues 139–159 (LIGTIFFCVGITTLLQTTFGC). Position 160 (Arg160) is a topological domain, cytoplasmic. The helical transmembrane segment at 161–181 (LPLFQASAFAFLAPARAILSL) threads the bilayer. The Extracellular portion of the chain corresponds to 182–215 (DKWKCNTTEITVANGTAELLEHIWHPRIQEIQGA). Residues Asn187 and Asn195 are each glycosylated (N-linked (GlcNAc...) asparagine). The helical transmembrane segment at 216-236 (IIMSSLIEVVIGLLGLPGALL) threads the bilayer. Topologically, residues 237-263 (RYIGPLTITPTVALIGLSGFQAAGERA) are cytoplasmic. Residues 264–281 (GKHWGIAMLTIFLVLLFS) traverse the membrane as a helical segment. Residues 282 to 285 (QYAR) lie on the Extracellular side of the membrane. The segment at residues 286 to 299 (NVKFPLPIYKSKKG) is an intramembrane region (helical). Residues 300-306 (WTAYKLQ) lie on the Extracellular side of the membrane. Residues 307-327 (LFKMFPIILAILVSWLLCFIF) form a helical membrane-spanning segment. The Cytoplasmic portion of the chain corresponds to 328–368 (TVTDVFPSNSTDYGYYARTDARKGVLLVAPWFKVPYPFQWG). Residues 369–389 (MPTVSAAGVIGMLSAVVASII) traverse the membrane as a helical segment. The Extracellular segment spans residues 390 to 414 (ESIGDYYACARLSCAPPPPIHAINR). A helical membrane pass occupies residues 415-435 (GIFVEGLSCVLDGVFGTGNGS). Residues 436–458 (TSSSPNIGVLGITKVGSRRVIQY) are Cytoplasmic-facing. Residues 459–479 (GAALMLGLGMIGKFSALFASL) traverse the membrane as a helical segment. Residues 480–482 (PDP) lie on the Extracellular side of the membrane. Residues 483 to 503 (VLGALFCTLFGMITAVGLSNL) form a helical membrane-spanning segment. The Cytoplasmic segment spans residues 504-513 (QFIDLNSSRN). Residues 514–534 (LFVLGFSIFFGLVLPSYLRQN) form a helical membrane-spanning segment. The Extracellular segment spans residues 535–544 (PLVTGITGID). Residues 545–565 (QVLNVLLTTAMFVGGCVAFIL) traverse the membrane as a helical segment. Residues 566-647 (DNTIPGTPEE…SSDKDSQATV (82 aa)) are Cytoplasmic-facing. Thr646 is subject to Phosphothreonine.

It belongs to the nucleobase:cation symporter-2 (NCS2) (TC 2.A.40) family. As to quaternary structure, interacts with CLSTN3. In terms of processing, phosphorylated. In terms of tissue distribution, highly expressed in neural, neuroendocrine, exocrine and endothelial tissues and in osteoblasts. Detected in neurons throughout the central nervous system, in meninges and choroid plexus, in the anterior pituitary, the intermediate lobe, in pancreas, adrenal cortex, gastric glands, and in the inner nuclear layer of the retina.

It localises to the cell membrane. The catalysed reaction is L-ascorbate(out) + 2 Na(+)(out) = L-ascorbate(in) + 2 Na(+)(in). Functionally, sodium/ascorbate cotransporter. Mediates electrogenic uptake of vitamin C, with a stoichiometry of 2 Na(+) for each ascorbate. This Rattus norvegicus (Rat) protein is Solute carrier family 23 member 2 (Slc23a2).